Here is a 286-residue protein sequence, read N- to C-terminus: Phosphate import ATP-binding protein PstB (286 aa).

Positions 40-281 (VVARDFSIYY…PKDSMTEDYI (242 aa)) constitute an ABC transporter domain. 72 to 79 (GPSGCGKS) lines the ATP pocket.

Belongs to the ABC transporter superfamily. Phosphate importer (TC 3.A.1.7) family. In terms of assembly, the complex is composed of two ATP-binding proteins (PstB), two transmembrane proteins (PstC and PstA) and a solute-binding protein (PstS).

The protein localises to the cell inner membrane. It carries out the reaction phosphate(out) + ATP + H2O = ADP + 2 phosphate(in) + H(+). Part of the ABC transporter complex PstSACB involved in phosphate import. Responsible for energy coupling to the transport system. This is Phosphate import ATP-binding protein PstB from Chlorobaculum tepidum (strain ATCC 49652 / DSM 12025 / NBRC 103806 / TLS) (Chlorobium tepidum).